The sequence spans 294 residues: MKIAAFDIGGTALKMGVVLPHGEIILTKSAEIIASDGDQILAEMKLFLAENTDVTGIAVSAPGYVNPKTGLITMGGAIRRFDNFNLKEWLEAETGLPVAIENDANCALLAEKWLGKGQDLDDFLCLTIGTGIGGGIFSNGALVRGGRFRAGEFGYMFSERPGAFRPGKYTLNETTTMLVLRRQYAQLTGRPLKEITGEEIFANYDAHDPISERLINEFYTGICTGLYNLIYLFDPTHIFIGGGITSRPTFITELKHHMASFGLRDTIIETATHKNQAGLLGAVYHFLQEENRHE.

Position 5–11 (5–11 (AFDIGGT)) interacts with ATP.

This sequence belongs to the ROK (NagC/XylR) family.

It catalyses the reaction D-cellobiose + ATP = 6-phospho-beta-D-glucosyl-(1-&gt;4)-D-glucose + ADP + H(+). Its function is as follows. Catalyzes the ATP-dependent phosphorylation of cellobiose to produce cellobiose-6'-P. May have a dual role of kinase and transcriptional regulator of the cellobiose-PTS operon. In Listeria innocua serovar 6a (strain ATCC BAA-680 / CLIP 11262), this protein is Beta-glucoside kinase (bglK).